The primary structure comprises 377 residues: Queuine tRNA-ribosyltransferase (377 aa).

Aspartate 89 serves as the catalytic Proton acceptor. Substrate contacts are provided by residues 89 to 93, aspartate 143, glutamine 187, and glycine 214; that span reads DSGGF. Residues 245–251 form an RNA binding region; the sequence is GVGKPED. Residue aspartate 264 is the Nucleophile of the active site. The segment at 269–273 is RNA binding; important for wobble base 34 recognition; it reads TRNAR. Residues cysteine 302, cysteine 304, cysteine 307, and histidine 333 each coordinate Zn(2+).

It belongs to the queuine tRNA-ribosyltransferase family. In terms of assembly, homodimer. Within each dimer, one monomer is responsible for RNA recognition and catalysis, while the other monomer binds to the replacement base PreQ1. Requires Zn(2+) as cofactor.

It carries out the reaction 7-aminomethyl-7-carbaguanine + guanosine(34) in tRNA = 7-aminomethyl-7-carbaguanosine(34) in tRNA + guanine. Its pathway is tRNA modification; tRNA-queuosine biosynthesis. Its function is as follows. Catalyzes the base-exchange of a guanine (G) residue with the queuine precursor 7-aminomethyl-7-deazaguanine (PreQ1) at position 34 (anticodon wobble position) in tRNAs with GU(N) anticodons (tRNA-Asp, -Asn, -His and -Tyr). Catalysis occurs through a double-displacement mechanism. The nucleophile active site attacks the C1' of nucleotide 34 to detach the guanine base from the RNA, forming a covalent enzyme-RNA intermediate. The proton acceptor active site deprotonates the incoming PreQ1, allowing a nucleophilic attack on the C1' of the ribose to form the product. After dissociation, two additional enzymatic reactions on the tRNA convert PreQ1 to queuine (Q), resulting in the hypermodified nucleoside queuosine (7-(((4,5-cis-dihydroxy-2-cyclopenten-1-yl)amino)methyl)-7-deazaguanosine). The chain is Queuine tRNA-ribosyltransferase from Shewanella piezotolerans (strain WP3 / JCM 13877).